The primary structure comprises 495 residues: Probable cytochrome P450 513C1 (495 aa).

A helical membrane pass occupies residues 1–21 (MNYLVLILVSLVSIYFLFIKN). Cys-441 contributes to the heme binding site.

It belongs to the cytochrome P450 family. Heme serves as cofactor.

The protein localises to the membrane. This chain is Probable cytochrome P450 513C1 (cyp513C1), found in Dictyostelium discoideum (Social amoeba).